Consider the following 479-residue polypeptide: Ribosomal RNA small subunit methyltransferase F (479 aa).

Residues 125 to 131 (AAAPGSK), E149, D176, and D194 each bind S-adenosyl-L-methionine. C247 functions as the Nucleophile in the catalytic mechanism.

The protein belongs to the class I-like SAM-binding methyltransferase superfamily. RsmB/NOP family.

It is found in the cytoplasm. It catalyses the reaction cytidine(1407) in 16S rRNA + S-adenosyl-L-methionine = 5-methylcytidine(1407) in 16S rRNA + S-adenosyl-L-homocysteine + H(+). In terms of biological role, specifically methylates the cytosine at position 1407 (m5C1407) of 16S rRNA. The protein is Ribosomal RNA small subunit methyltransferase F of Escherichia coli O157:H7 (strain EC4115 / EHEC).